Consider the following 212-residue polypeptide: Large ribosomal subunit protein uL3 (212 aa).

Position 152 is an N5-methylglutamine (Gln-152).

It belongs to the universal ribosomal protein uL3 family. As to quaternary structure, part of the 50S ribosomal subunit. Forms a cluster with proteins L14 and L19. Post-translationally, methylated by PrmB.

Functionally, one of the primary rRNA binding proteins, it binds directly near the 3'-end of the 23S rRNA, where it nucleates assembly of the 50S subunit. The chain is Large ribosomal subunit protein uL3 from Marinomonas sp. (strain MWYL1).